We begin with the raw amino-acid sequence, 188 residues long: UPF0301 protein XOO1309 (188 aa).

Belongs to the UPF0301 (AlgH) family.

The polypeptide is UPF0301 protein XOO1309 (Xanthomonas oryzae pv. oryzae (strain MAFF 311018)).